The following is a 426-amino-acid chain: Zinc finger CCCH domain-containing protein 13 (426 aa).

The segment at 10-36 (AYKTKLCALWQRGNCNRDTCSFAHGHG) adopts a C3H1-type zinc-finger fold. Disordered stretches follow at residues 34-155 (GHGD…HEKQ), 253-317 (NEEG…DKTS), and 390-426 (NDAD…VDVE). Composition is skewed to basic and acidic residues over residues 54 to 70 (RRDY…DRRF), 78 to 101 (PGRE…RDSS), and 108 to 120 (RKSE…KTDD). Positions 124–133 (NSSRSLSLSD) are enriched in low complexity. The segment covering 135–155 (NDEKKKDKFSSGDEKEDHEKQ) has biased composition (basic and acidic residues). Positions 144–245 (SSGDEKEDHE…FERLGDLLAS (102 aa)) form a coiled coil. The span at 255–272 (EGSSVNEDLNERSPNTAA) shows a compositional bias: polar residues. The span at 284–317 (EEAKAVKKRRERDSDTMTRSDKYRSDVTDFDKTS) shows a compositional bias: basic and acidic residues. Acidic residues predominate over residues 416 to 426 (YEGDDEEVDVE).

This Oryza sativa subsp. japonica (Rice) protein is Zinc finger CCCH domain-containing protein 13.